Consider the following 778-residue polypeptide: High affinity nerve growth factor receptor (778 aa).

A signal peptide spans 1–14 (WGCLRLPLPLCHAL). Over 15–400 (AAHCRCPASH…VETADEHTFG (386 aa)) the chain is Extracellular. Residues cysteine 18 and cysteine 20 are joined by a disulfide bond. 2 LRR repeats span residues 71–92 (DLRH…AFQD) and 95–116 (RLSH…TFQH). N-linked (GlcNAc...) asparagine glycosylation is found at asparagine 100, asparagine 130, asparagine 143, asparagine 151, asparagine 194, asparagine 234, asparagine 262, asparagine 300, asparagine 320, asparagine 340, and asparagine 384. Positions 127-175 (NPFNCSCGIRWLQLWQNGSRAELGNQSLLCWEGSMLVALDSHPLHDCEP) constitute an LRRCT domain. Cysteine 133 and cysteine 173 are disulfide-bonded. 2 Ig-like C2-type domains span residues 175-262 (PPTA…VMLN) and 281-347 (WCIP…VVQN). A disulfide bridge links cysteine 282 with cysteine 327. The chain crosses the membrane as a helical span at residues 401-421 (VSVAVALAVFASLFLSVMLIA). Topologically, residues 422–778 (LNKCGHRSKF…TPPIYLDILG (357 aa)) are cytoplasmic. Position 479 is a phosphotyrosine; by autocatalysis (tyrosine 479). In terms of domain architecture, Protein kinase spans 493–763 (IVLKWELGEG…RSIQDIHSRL (271 aa)). ATP-binding positions include 499 to 507 (LGEGAFGKV) and lysine 527. Aspartate 633 (proton acceptor) is an active-site residue. 4 positions are modified to phosphotyrosine; by autocatalysis: tyrosine 659, tyrosine 663, tyrosine 664, and tyrosine 773.

It belongs to the protein kinase superfamily. Tyr protein kinase family. Insulin receptor subfamily. As to quaternary structure, exists in a dynamic equilibrium between monomeric (low affinity) and dimeric (high affinity) structures. Homodimerization is induced by NGF dimer binding. Interacts with PTPRS. In terms of processing, ligand-mediated auto-phosphorylation. Post-translationally, ubiquitinated. Undergoes polyubiquitination upon activation; regulated by NGFR. Ubiquitination regulates the internalization of the receptor.

It is found in the cell membrane. The protein localises to the early endosome membrane. It localises to the late endosome membrane. Its subcellular location is the recycling endosome membrane. The enzyme catalyses L-tyrosyl-[protein] + ATP = O-phospho-L-tyrosyl-[protein] + ADP + H(+). Its activity is regulated as follows. The pro-survival signaling effect of NTRK1 in neurons requires its endocytosis into signaling early endosomes and its retrograde axonal transport. Functionally, receptor tyrosine kinase involved in the development and the maturation of the central and peripheral nervous systems through regulation of proliferation, differentiation and survival of sympathetic and nervous neurons. High affinity receptor for NGF which is its primary ligand, it can also bind and be activated by NTF3/neurotrophin-3. Upon dimeric NGF ligand-binding, undergoes homodimerization, autophosphorylation and activation. Recruits, phosphorylates and/or activates several downstream effectors that regulate distinct overlapping signaling cascades driving cell survival and differentiation. In absence of ligand and activation, may promote cell death, making the survival of neurons dependent on trophic factors. In Gallus gallus (Chicken), this protein is High affinity nerve growth factor receptor (NTRK1).